The sequence spans 366 residues: Spermine synthase (366 aa).

At alanine 2 the chain carries N-acetylalanine. Serine 57 is modified (phosphoserine). One can recognise a PABS domain in the interval 122–362 (RYWPTADGRL…ELWVFYTVWK (241 aa)). An S-adenosyl 3-(methylsulfanyl)propylamine-binding site is contributed by glutamine 148. Spermidine is bound by residues tyrosine 177 and aspartate 201. S-adenosyl 3-(methylsulfanyl)propylamine is bound by residues glutamate 220 and 255–256 (DC). Aspartate 276 acts as the Proton acceptor in catalysis. Spermidine-binding residues include tyrosine 351 and glutamate 353.

Belongs to the spermidine/spermine synthase family. As to quaternary structure, homodimer. Dimerization is mediated through the N-terminal domain and seems to be required for activity as deletion of the N-terminal domain causes complete loss of activity.

It carries out the reaction S-adenosyl 3-(methylsulfanyl)propylamine + spermidine = spermine + S-methyl-5'-thioadenosine + H(+). The protein operates within amine and polyamine biosynthesis; spermine biosynthesis; spermine from spermidine: step 1/1. Catalyzes the production of spermine from spermidine and decarboxylated S-adenosylmethionine (dcSAM). Required for normal viability, growth and fertility. This Mus musculus (Mouse) protein is Spermine synthase (Sms).